Here is a 118-residue protein sequence, read N- to C-terminus: Large ribosomal subunit protein bL20 (118 aa).

It belongs to the bacterial ribosomal protein bL20 family.

Functionally, binds directly to 23S ribosomal RNA and is necessary for the in vitro assembly process of the 50S ribosomal subunit. It is not involved in the protein synthesizing functions of that subunit. The sequence is that of Large ribosomal subunit protein bL20 from Pelagibacter ubique (strain HTCC1062).